Here is a 617-residue protein sequence, read N- to C-terminus: Pentatricopeptide repeat-containing protein At4g18520, chloroplastic (617 aa).

The transit peptide at 1-19 (MFSLSLIQPRLRISEIPVT) directs the protein to the chloroplast. PPR repeat units follow at residues 116 to 146 (VIYF…MPEK), 147 to 181 (NTVT…GIRF), 183 to 217 (NERM…GVGN), 222 to 247 (SSLV…MEEK), 248 to 282 (DVIS…WFLP), 283 to 317 (NEFT…MIKT), 318 to 348 (DVFV…MSNR), 349 to 383 (NTVT…HLIA), 384 to 418 (NNLT…SIEK), 419 to 449 (NVYI…LPSR), 450 to 484 (DVVS…GVEP), 485 to 519 (NPFT…HALS), 520 to 550 (NVFV…MPEK), and 551 to 585 (NLVS…GFEV).

This sequence belongs to the PPR family. PCMP-A subfamily. In terms of assembly, interacts with MORF8/RIP1, MORF2/RIP2 and MORF9/RIP9. In terms of tissue distribution, expressed specifically in aerial greening tissues, such as cotyledons, rosette leaves, cauline leaves, stems, sepals, stamens, carpels and siliques.

The protein resides in the plastid. Its subcellular location is the chloroplast. Required for proper chloroplast development. Involved in the regulation of plastid gene expression probably through regulation of plastid-encoded polymerase (PEP) dependent chloroplast transcription. Required for RNA editing of several chloroplastic transcripts, especially accD transcripts. Required for processing of the chloroplastic rpoA pre-mRNA. Required for the monocistronic rpoA transcript processing from the rpl23-rpl2-rps19-rpl22-rps3-rpl16-rpl14-rps8-rpl36-rps11-rpoA polycistron. Binds the intergenic sequence of rps11-rpoA for rpoA monocistronic RNA cleavage. The sequence is that of Pentatricopeptide repeat-containing protein At4g18520, chloroplastic (PCMP-A2) from Arabidopsis thaliana (Mouse-ear cress).